The following is a 354-amino-acid chain: Dihydroorotate dehydrogenase (quinone) (354 aa).

FMN is bound by residues 70 to 74 (AGFDK) and threonine 94. Substrate is bound at residue lysine 74. 119–123 (NAMGF) contributes to the substrate binding site. Residues asparagine 148 and asparagine 181 each contribute to the FMN site. Asparagine 181 lines the substrate pocket. Residue serine 184 is the Nucleophile of the active site. Asparagine 186 is a substrate binding site. Residues lysine 217 and threonine 245 each coordinate FMN. 246–247 (NT) provides a ligand contact to substrate. FMN is bound by residues glycine 265, glycine 294, and 315–316 (YS).

It belongs to the dihydroorotate dehydrogenase family. Type 2 subfamily. As to quaternary structure, monomer. Requires FMN as cofactor.

It is found in the cell membrane. The enzyme catalyses (S)-dihydroorotate + a quinone = orotate + a quinol. It functions in the pathway pyrimidine metabolism; UMP biosynthesis via de novo pathway; orotate from (S)-dihydroorotate (quinone route): step 1/1. Functionally, catalyzes the conversion of dihydroorotate to orotate with quinone as electron acceptor. The sequence is that of Dihydroorotate dehydrogenase (quinone) from Sulfurovum sp. (strain NBC37-1).